The chain runs to 345 residues: 1-aminocyclopropane-1-carboxylate oxidase homolog 7 (345 aa).

A Glycyl lysine isopeptide (Lys-Gly) (interchain with G-Cter in ubiquitin) cross-link involves residue K16. The Fe2OG dioxygenase domain occupies 194 to 293; that stretch reads KGLHMICHYY…RISIACFFSS (100 aa). Fe cation is bound by residues H218, D220, and H274. R284 contacts 2-oxoglutarate.

This sequence belongs to the iron/ascorbate-dependent oxidoreductase family. The cofactor is Fe(2+).

This chain is 1-aminocyclopropane-1-carboxylate oxidase homolog 7, found in Arabidopsis thaliana (Mouse-ear cress).